Here is a 537-residue protein sequence, read N- to C-terminus: Glutamate--tRNA ligase (537 aa).

The short motif at 9 to 19 (PSPTGLQHIGG) is the 'HIGH' region element. Cysteine 125, cysteine 127, cysteine 152, and glutamate 154 together coordinate Zn(2+). The 'KMSKS' region signature appears at 270–274 (KLSKR). ATP is bound at residue lysine 273.

This sequence belongs to the class-I aminoacyl-tRNA synthetase family. Glutamate--tRNA ligase type 1 subfamily. In terms of assembly, monomer. The cofactor is Zn(2+).

It localises to the cytoplasm. The catalysed reaction is tRNA(Glu) + L-glutamate + ATP = L-glutamyl-tRNA(Glu) + AMP + diphosphate. Its function is as follows. Catalyzes the attachment of glutamate to tRNA(Glu) in a two-step reaction: glutamate is first activated by ATP to form Glu-AMP and then transferred to the acceptor end of tRNA(Glu). This is Glutamate--tRNA ligase from Treponema pallidum (strain Nichols).